Here is an 888-residue protein sequence, read N- to C-terminus: 3-hydroxy-3-methylglutaryl-coenzyme A reductase (888 aa).

At M1–H9 the chain is on the cytoplasmic side. Residues G10–G39 form a helical membrane-spanning segment. Topologically, residues N40–D56 are lumenal. A helical transmembrane segment spans residues V57–F78. One can recognise an SSD domain in the interval D61–L218. The INSIG-binding motif motif lies at Y75–F78. The Cytoplasmic portion of the chain corresponds to Q79–K89. Residue K89 forms a Glycyl lysine isopeptide (Lys-Gly) (interchain with G-Cter in ubiquitin) linkage. A helical membrane pass occupies residues Y90 to L114. The Lumenal segment spans residues D115 to E123. The chain crosses the membrane as a helical span at residues A124 to S149. Topologically, residues Q150–R159 are cytoplasmic. Residues G160 to V187 form a helical membrane-spanning segment. The Lumenal segment spans residues R188 to E191. The chain crosses the membrane as a helical span at residues I192–L220. Over E221–K248 the chain is Cytoplasmic. K248 is covalently cross-linked (Glycyl lysine isopeptide (Lys-Gly) (interchain with G-Cter in ubiquitin)). A helical transmembrane segment spans residues P249 to A275. At D276–K314 the chain is on the lumenal side. N-linked (GlcNAc...) asparagine glycans are attached at residues N281 and N296. A helical membrane pass occupies residues M315–F339. The Cytoplasmic portion of the chain corresponds to E340–A888. Catalysis depends on charge relay system residues E559, K691, and D767. H866 functions as the Proton donor in the catalytic mechanism. At S872 the chain carries Phosphoserine; by AMPK.

Belongs to the HMG-CoA reductase family. In terms of assembly, homotetramer. Homodimer. Interacts (via its SSD) with INSIG1; the interaction, accelerated by sterols, leads to the recruitment of HMGCR to AMFR/gp78 for its ubiquitination by the sterol-mediated ERAD pathway. Interacts with UBIAD1. In terms of processing, undergoes sterol-mediated ubiquitination and ER-associated degradation (ERAD). Accumulation of sterols in the endoplasmic reticulum (ER) membrane, triggers binding of the reductase to the ER membrane protein INSIG1 or INSIG2. The INSIG1 binding leads to the recruitment of the ubiquitin ligase, AMFR/gp78, RNF139 or RNF145, initiating ubiquitination of the reductase. The ubiquitinated reductase is then extracted from the ER membrane and delivered to cytosolic 26S proteosomes by a mechanism probably mediated by the ATPase Valosin-containing protein VCP/p97. The INSIG2-binding leads to the recruitment of the ubiquitin ligase RNF139, initiating ubiquitination of the reductase. Lys-248 is the main site of ubiquitination. Ubiquitination is enhanced by the presence of a geranylgeranylated protein. N-glycosylated. Deglycosylated by NGLY1 on release from the endoplasmic reticulum (ER) in a sterol-mediated manner. Post-translationally, phosphorylated. Phosphorylation at Ser-872 reduces the catalytic activity.

The protein localises to the endoplasmic reticulum membrane. It is found in the peroxisome membrane. The catalysed reaction is (R)-mevalonate + 2 NADP(+) + CoA = (3S)-3-hydroxy-3-methylglutaryl-CoA + 2 NADPH + 2 H(+). It participates in metabolic intermediate biosynthesis; (R)-mevalonate biosynthesis; (R)-mevalonate from acetyl-CoA: step 3/3. Regulated by a negative feedback mechanism through sterols and non-sterol metabolites derived from mevalonate. Phosphorylation at Ser-872 down-regulates the catalytic activity. Its function is as follows. Catalyzes the conversion of (3S)-hydroxy-3-methylglutaryl-CoA (HMG-CoA) to mevalonic acid, the rate-limiting step in the synthesis of cholesterol and other isoprenoids, thus plays a critical role in cellular cholesterol homeostasis. This Oryctolagus cuniculus (Rabbit) protein is 3-hydroxy-3-methylglutaryl-coenzyme A reductase (HMGCR).